Here is a 337-residue protein sequence, read N- to C-terminus: Glucokinase (337 aa).

Position 11–16 (11–16 (ADIGGT)) interacts with ATP.

The protein belongs to the bacterial glucokinase family.

It localises to the cytoplasm. The catalysed reaction is D-glucose + ATP = D-glucose 6-phosphate + ADP + H(+). This chain is Glucokinase, found in Xylella fastidiosa (strain M12).